The primary structure comprises 213 residues: Ras-like protein rasX (213 aa).

Residue 16-23 (GDGGVGKT) coordinates GTP. The Effector region signature appears at 38–46 (YDPTIEDSY). GTP contacts are provided by residues 63-67 (DTAGQ) and 122-125 (NKSD). The residue at position 210 (cysteine 210) is a Cysteine methyl ester. Residue cysteine 210 is the site of S-geranylgeranyl cysteine attachment. Positions 211–213 (KMM) are cleaved as a propeptide — removed in mature form.

Belongs to the small GTPase superfamily. Ras family.

The protein resides in the cell membrane. It carries out the reaction GTP + H2O = GDP + phosphate + H(+). Its function is as follows. Ras proteins bind GDP/GTP and possess intrinsic GTPase activity. The polypeptide is Ras-like protein rasX (rasX) (Dictyostelium discoideum (Social amoeba)).